Here is a 99-residue protein sequence, read N- to C-terminus: NADH-quinone oxidoreductase subunit K (99 aa).

The next 3 helical transmembrane spans lie at 3–23 (ILFSLFISMAMFTFGIIGILI), 28–48 (LIVFMCVELMLNAANLLFVAF), and 59–79 (IWVFFVLVVAAAEAAVGLAII).

Belongs to the complex I subunit 4L family. As to quaternary structure, NDH-1 is composed of 14 different subunits. Subunits NuoA, H, J, K, L, M, N constitute the membrane sector of the complex.

The protein resides in the cell inner membrane. The catalysed reaction is a quinone + NADH + 5 H(+)(in) = a quinol + NAD(+) + 4 H(+)(out). Functionally, NDH-1 shuttles electrons from NADH, via FMN and iron-sulfur (Fe-S) centers, to quinones in the respiratory chain. The immediate electron acceptor for the enzyme in this species is believed to be ubiquinone. Couples the redox reaction to proton translocation (for every two electrons transferred, four hydrogen ions are translocated across the cytoplasmic membrane), and thus conserves the redox energy in a proton gradient. The polypeptide is NADH-quinone oxidoreductase subunit K (Protochlamydia amoebophila (strain UWE25)).